The chain runs to 451 residues: Tubulin alpha-1 chain (451 aa).

Residue Q11 coordinates GTP. K40 carries the post-translational modification N6-acetyllysine. Residues E71, G144, T145, T179, N206, and N228 each contribute to the GTP site. E71 contributes to the Mg(2+) binding site. E254 is an active-site residue.

The protein belongs to the tubulin family. Dimer of alpha and beta chains. A typical microtubule is a hollow water-filled tube with an outer diameter of 25 nm and an inner diameter of 15 nM. Alpha-beta heterodimers associate head-to-tail to form protofilaments running lengthwise along the microtubule wall with the beta-tubulin subunit facing the microtubule plus end conferring a structural polarity. Microtubules usually have 13 protofilaments but different protofilament numbers can be found in some organisms and specialized cells. Mg(2+) is required as a cofactor. Post-translationally, undergoes a tyrosination/detyrosination cycle, the cyclic removal and re-addition of a C-terminal tyrosine residue by the enzymes tubulin tyrosine carboxypeptidase (TTCP) and tubulin tyrosine ligase (TTL), respectively. In terms of processing, acetylation of alpha chains at Lys-40 stabilizes microtubules and affects affinity and processivity of microtubule motors. This modification has a role in multiple cellular functions, ranging from cell motility, cell cycle progression or cell differentiation to intracellular trafficking and signaling.

The protein localises to the cytoplasm. It localises to the cytoskeleton. The enzyme catalyses GTP + H2O = GDP + phosphate + H(+). In terms of biological role, tubulin is the major constituent of microtubules, a cylinder consisting of laterally associated linear protofilaments composed of alpha- and beta-tubulin heterodimers. Microtubules grow by the addition of GTP-tubulin dimers to the microtubule end, where a stabilizing cap forms. Below the cap, tubulin dimers are in GDP-bound state, owing to GTPase activity of alpha-tubulin. This is Tubulin alpha-1 chain (TUBA1) from Eleusine indica (Goosegrass).